Consider the following 129-residue polypeptide: MKGMFFCARAVVPFMKKSKDGAIVNVGSIAGITGAGSSMPYAVSKSAVHGLTKSLAHALAPEIRVSGVAPGAVATRWWAGREEKMKSMIGSLLLQCIAEPDDVAKLICSLIEQESLTGQIITIDSGQTL.

The protein belongs to the short-chain dehydrogenases/reductases (SDR) family.

This is Short-chain dehydrogenase/reductase homolog YusR (yusR) from Bacillus subtilis (strain 168).